Reading from the N-terminus, the 239-residue chain is Transcription factor MYB10 (239 aa).

2 consecutive HTH myb-type domains span residues 11-63 and 64-118; these read KSQV…INYL and RPGL…KKRL. DNA-binding regions (H-T-H motif) lie at residues 39-63 and 91-114; these read WRSLPKLAGLMRCGKSCRLRWINYL and WSKIASNFPGRTDNEIKNVWNTHL.

In terms of tissue distribution, expressed in cauline leaves and siliques.

Its subcellular location is the nucleus. Functionally, involved in metal ions homeostasis, including iron ions (Fe) acquisition, via the regulation of NAS4 and NAS2 genes expression. Necessary for plant survival in alkaline soil where iron availability is greatly restricted. Triggers tolerance to nickel (Ni) and zinc (Zn) ions. In Arabidopsis thaliana (Mouse-ear cress), this protein is Transcription factor MYB10.